A 77-amino-acid polypeptide reads, in one-letter code: U8-lycotoxin-Ls1v (77 aa).

A signal peptide spans 1-20 (MKLIIFTGLVLFGIVSLIEA). The propeptide occupies 21–26 (QAENEK).

This sequence belongs to the neurotoxin 19 (CSTX) family. 08 (U8-Lctx) subfamily. Post-translationally, contains 4 disulfide bonds. As to expression, expressed by the venom gland.

The protein resides in the secreted. This Lycosa singoriensis (Wolf spider) protein is U8-lycotoxin-Ls1v.